A 393-amino-acid chain; its full sequence is MALSRLSSRSNTFLKPAITALPSSIRRHVSTDSSPITIETAVPFTSHLCESPSRSVETSSEEILAFFRDMARMRRMEIAADSLYKAKLIRGFCHLYDGQEALAVGMEAAITKKDAIITSYRDHCTFIGRGGKLVDAFSELMGRKTGCSHGKGGSMHFYKKDASFYGGHGIVGAQIPLGCGLAFAQKYNKDEAVTFALYGDGAANQGQLFEALNISALWDLPAILVCENNHYGMGTATWRSAKSPAYFKRGDYVPGLKVDGMDALAVKQACKFAKEHALKNGPIILEMDTYRYHGHSMSDPGSTYRTRDEISGVRQVRDPIERVRKLLLTHDIATEKELKDMEKEIRKEVDDAVAQAKESPIPDASELFTNMYVKDCGVESFGADRKELKVTLP.

The transit peptide at 1 to 28 (MALSRLSSRSNTFLKPAITALPSSIRRH) directs the protein to the mitochondrion. His-94, Tyr-120, Arg-121, Gly-169, Val-171, Asp-200, Gly-201, Ala-202, Asn-229, and Tyr-231 together coordinate pyruvate. Thiamine diphosphate contacts are provided by Tyr-120, Arg-121, Gly-169, Val-171, Asp-200, Gly-201, Ala-202, and Asn-229. Asp-200 is a binding site for Mg(2+). Mg(2+) contacts are provided by Asn-229 and Tyr-231. His-295 lines the thiamine diphosphate pocket.

As to quaternary structure, tetramer of 2 alpha and 2 beta subunits. Requires thiamine diphosphate as cofactor. The cofactor is Mg(2+).

Its subcellular location is the mitochondrion matrix. The catalysed reaction is N(6)-[(R)-lipoyl]-L-lysyl-[protein] + pyruvate + H(+) = N(6)-[(R)-S(8)-acetyldihydrolipoyl]-L-lysyl-[protein] + CO2. Its activity is regulated as follows. E1 activity is regulated by phosphorylation (inactivation) and dephosphorylation (activation) of the alpha subunit. Functionally, the pyruvate dehydrogenase complex catalyzes the overall conversion of pyruvate to acetyl-CoA and CO(2). It contains multiple copies of three enzymatic components: pyruvate dehydrogenase (E1), dihydrolipoamide acetyltransferase (E2) and lipoamide dehydrogenase (E3). This Arabidopsis thaliana (Mouse-ear cress) protein is Pyruvate dehydrogenase E1 component subunit alpha-2, mitochondrial (IAR4).